The primary structure comprises 458 residues: Exodeoxyribonuclease 7 large subunit (458 aa).

It belongs to the XseA family. Heterooligomer composed of large and small subunits.

Its subcellular location is the cytoplasm. It catalyses the reaction Exonucleolytic cleavage in either 5'- to 3'- or 3'- to 5'-direction to yield nucleoside 5'-phosphates.. Its function is as follows. Bidirectionally degrades single-stranded DNA into large acid-insoluble oligonucleotides, which are then degraded further into small acid-soluble oligonucleotides. The polypeptide is Exodeoxyribonuclease 7 large subunit (Escherichia coli O81 (strain ED1a)).